A 127-amino-acid chain; its full sequence is Small ribosomal subunit protein uS11 (127 aa).

It belongs to the universal ribosomal protein uS11 family. As to quaternary structure, part of the 30S ribosomal subunit. Interacts with proteins S7 and S18. Binds to IF-3.

Its function is as follows. Located on the platform of the 30S subunit, it bridges several disparate RNA helices of the 16S rRNA. Forms part of the Shine-Dalgarno cleft in the 70S ribosome. This Streptococcus thermophilus (strain CNRZ 1066) protein is Small ribosomal subunit protein uS11.